A 160-amino-acid chain; its full sequence is Lipoprotein signal peptidase (160 aa).

3 helical membrane passes run 5–25 (LVFF…KFII), 60–80 (IEWL…AFFI), and 84–104 (LPFL…AGTV). Active-site residues include D118 and D132. Residues 128 to 148 (FNIADSCLTVGVIGLLLLYIV) traverse the membrane as a helical segment.

Belongs to the peptidase A8 family.

The protein localises to the cell membrane. It carries out the reaction Release of signal peptides from bacterial membrane prolipoproteins. Hydrolyzes -Xaa-Yaa-Zaa-|-(S,diacylglyceryl)Cys-, in which Xaa is hydrophobic (preferably Leu), and Yaa (Ala or Ser) and Zaa (Gly or Ala) have small, neutral side chains.. Its pathway is protein modification; lipoprotein biosynthesis (signal peptide cleavage). In terms of biological role, this protein specifically catalyzes the removal of signal peptides from prolipoproteins. The protein is Lipoprotein signal peptidase of Dehalococcoides mccartyi (strain ATCC BAA-2100 / JCM 16839 / KCTC 5957 / BAV1).